A 1019-amino-acid polypeptide reads, in one-letter code: Sca1 complex protein phr (1019 aa).

4 disordered regions span residues 89–118, 131–202, 265–287, and 512–546; these read IVIN…SSNF, AFNN…INNN, QQLN…NSAN, and STNN…TNNL. The segment covering 93–102 has biased composition (low complexity); that stretch reads SSSSSSSSSS. A compositionally biased stretch (basic and acidic residues) spans 141–155; it reads NRKEKEKDKDKDHQD. Residues 158–188 are a coiled coil; sequence NINNINNINNNINNNINNNNNNNNNNNNNNN. The span at 158–202 shows a compositional bias: low complexity; that stretch reads NINNINNINNNINNNINNNNNNNNNNNNNNNMHNPTSSSPSINNN. Residues 735 to 836 form the PH domain; sequence EIKKKGYLFK…WIKAIKFNCF (102 aa). A compositionally biased stretch (low complexity) spans 860–872; sequence VAGSGSNNGNNNG. 3 disordered regions span residues 860–890, 904–951, and 977–1019; these read VAGS…GSFI, NLSI…QQQL, and SSYT…SKLK. A compositionally biased stretch (polar residues) spans 879–890; the sequence is TTQQLNNSGSFI. Over residues 977-986 the composition is skewed to low complexity; it reads SSYTDSMSGS. Over residues 987-1019 the composition is skewed to polar residues; that stretch reads PPDSNGQVFPQSPQLKKTLFQRTTSFSKGSKLK.

As to quaternary structure, component of the Sca1 complex composed of at least gefA, gefH, scaA, phr, and the protein phosphatase 2A subunits pppA and pho2B. Interacts directly with gefH.

It is found in the cell membrane. Component of the Sca1 complex, a regulator of cell motility, chemotaxis and signal relay. The Sca1 complex is recruited to the plasma membrane in a chemoattractant- and F-actin-dependent manner and is enriched at the leading edge of chemotaxing cells where it regulates F-actin dynamics and signal relay by controlling the activation of rasC and the downstream target of rapamycin complex 2 (TORC2)-Akt/protein kinase B (PKB) pathway. This Dictyostelium discoideum (Social amoeba) protein is Sca1 complex protein phr.